A 282-amino-acid chain; its full sequence is Formate channel FocB (282 aa).

Residues 1–35 (MRNKLSFDLQLSARKAAIAERIAAHKIARSKVSVF) are Cytoplasmic-facing. Residues 36-56 (LMAMSAGVFMAIGFTFYLSVI) traverse the membrane as a helical segment. At 57-68 (ADAPSSQALTHL) the chain is on the periplasmic side. The helical transmembrane segment at 69-89 (VGGLCFTLGFILLAVCGTSLF) threads the bilayer. The Cytoplasmic segment spans residues 90–112 (TSSVMTVMAKSRGVISWRTWLIN). A helical transmembrane segment spans residues 113 to 133 (ALLVACGNLAGIACFSLLIWF). Over 134 to 163 (SGLVMSENAMWGVAVLHCAEGKMHHTFTES) the chain is Periplasmic. A helical transmembrane segment spans residues 164–184 (VSLGIMCNLMVCLALWMSYCG). The Cytoplasmic segment spans residues 185-190 (RSLCDK). Residues 191–211 (IVAMILPITLFVASGFEHCIA) form a helical membrane-spanning segment. Residues 212 to 248 (NLFVIPFAIAIRHFAPPPFWQLAHSSADNFPALTVSH) are Periplasmic-facing. Residues 249–269 (FITANLLPVMLGNIIGGAVLV) form a helical membrane-spanning segment. The Cytoplasmic segment spans residues 270 to 282 (SMCYRAIYLRQEP).

It belongs to the FNT transporter (TC 1.A.16) family.

It is found in the cell inner membrane. The enzyme catalyses formate(in) = formate(out). Its activity is regulated as follows. The direction of formate translocation depends on external pH and electron donor source. Involved in the bidirectional transport of formate during mixed-acid fermentation. In Escherichia coli (strain K12), this protein is Formate channel FocB.